A 200-amino-acid polypeptide reads, in one-letter code: Probable molybdenum cofactor guanylyltransferase (200 aa).

Residues 9–11 (LAG), K21, D69, and D100 each bind GTP. D100 is a binding site for Mg(2+).

This sequence belongs to the MobA family. Mg(2+) is required as a cofactor.

The protein resides in the cytoplasm. The enzyme catalyses Mo-molybdopterin + GTP + H(+) = Mo-molybdopterin guanine dinucleotide + diphosphate. Transfers a GMP moiety from GTP to Mo-molybdopterin (Mo-MPT) cofactor (Moco or molybdenum cofactor) to form Mo-molybdopterin guanine dinucleotide (Mo-MGD) cofactor. The protein is Probable molybdenum cofactor guanylyltransferase of Bacillus mycoides (strain KBAB4) (Bacillus weihenstephanensis).